The primary structure comprises 944 residues: Protein unc-45 homolog A (944 aa).

The segment at 1-25 is disordered; sequence MTVSGPETPEPRPSDPGASSAEQLR. TPR repeat units follow at residues 21–54, 58–91, and 92–125; these read AEQLRKEGNELFKCGDYEGALTAYTQALSLGATP, AILHRNRAACHLKLEDYSKAESEASKAIEKDGGD, and VKALYRRSQALEKLGRLDQAVLDLKRCVSLEPKN. Lys70 bears the N6-acetyllysine mark. The residue at position 483 (Lys483) is an N6-acetyllysine.

In terms of assembly, interacts with PGR isoforms A and B as well as with NR3C1 in the absence of ligand, and with HSP90AB1. Binding to HSP90AB1 involves 2 UNC45A monomers per HSP90AB1 dimer. As to expression, detected in spleen, bone marrow, lung and ovary, and at lower levels in testis, kidney, heart and brain (at protein level). Ubiquitous. Detected in uterus, large intestine, kidney, spleen, lung, brain, liver and ovary.

It localises to the cytoplasm. Its subcellular location is the perinuclear region. The protein localises to the nucleus. Its function is as follows. May act as co-chaperone for HSP90 (Potential). Prevents the stimulation of HSP90AB1 ATPase activity by AHSA1. Positive factor in promoting PGR function in the cell. May be necessary for proper folding of myosin (Potential). Necessary for normal cell proliferation. Necessary for normal myotube formation and myosin accumulation during muscle cell development. May play a role in erythropoiesis in stroma cells in the spleen. This Mus musculus (Mouse) protein is Protein unc-45 homolog A (Unc45a).